The primary structure comprises 184 residues: Probable RNA 2'-phosphotransferase (184 aa).

This sequence belongs to the KptA/TPT1 family.

Functionally, removes the 2'-phosphate from RNA via an intermediate in which the phosphate is ADP-ribosylated by NAD followed by a presumed transesterification to release the RNA and generate ADP-ribose 1''-2''-cyclic phosphate (APPR&gt;P). May function as an ADP-ribosylase. In Escherichia coli (strain 55989 / EAEC), this protein is Probable RNA 2'-phosphotransferase.